Reading from the N-terminus, the 356-residue chain is MEWWKKKSLRAIIKRERLVRGHERGGTLLEEIIKSCNGKANPIKIFSADQILEATDTFSESNRVSELFDEIPYDWYYSGKNNNHHHHHKLLLIKKWRYRFSEHNGGNFCRDIAISSIVSGHKNFMQLVGCCLESEHPVLVYRASKKPTSLDLKMVVSWRQRLKIAEEIATALAYLHTAFPRPFVYRILRLEDILLDDEDGVAKLCNFSYCVSIPQGETFVKLGNGCIGGDYDYMDDNYLINGIVSEKTDAFGFGIFMQKLLMGEERFHELCYDRSDLTTFENRRKFAKCIDEIVDSNMLEKIGDVTEEERCRMEAFIVLSERCIGLRGEVPKMVEVAKELKRFLRDSSSSCGETSL.

Positions 62-356 (NRVSELFDEI…SSSSCGETSL (295 aa)) constitute a Protein kinase domain. ATP contacts are provided by residues 68–76 (FDEIPYDWY) and Lys-94.

The protein belongs to the protein kinase superfamily. Ser/Thr protein kinase family. ZRK subfamily. Interacts with RPP13L4/ZAR1.

This chain is Non-functional pseudokinase ZRK15, found in Arabidopsis thaliana (Mouse-ear cress).